Reading from the N-terminus, the 171-residue chain is Vimentin-type intermediate filament-associated coiled-coil protein (171 aa).

A coiled-coil region spans residues 7 to 98 (LQIREANAHL…QRDQMIQELQ (92 aa)). The interval 126–171 (ELGPLPSSHSHGAQLLPDGPGPPLGNSMREEEGQDDQQPAVFGTTV) is disordered.

In terms of tissue distribution, expressed in brain, heart, kidney, liver, lung, skeletal muscle, spleen and testis. Within the kidney expression is pronounced within glomeruli.

It localises to the cytoplasm. This Rattus norvegicus (Rat) protein is Vimentin-type intermediate filament-associated coiled-coil protein (Vmac).